The primary structure comprises 222 residues: 3-dehydroquinate dehydratase (222 aa).

Residues 29-31 and arginine 55 each bind 3-dehydroquinate; that span reads ELR. The active-site Proton donor/acceptor is the histidine 112. The active-site Schiff-base intermediate with substrate is the lysine 139. 3 residues coordinate 3-dehydroquinate: arginine 178, serine 199, and glutamine 203.

Belongs to the type-I 3-dehydroquinase family. As to quaternary structure, homodimer.

The enzyme catalyses 3-dehydroquinate = 3-dehydroshikimate + H2O. It participates in metabolic intermediate biosynthesis; chorismate biosynthesis; chorismate from D-erythrose 4-phosphate and phosphoenolpyruvate: step 3/7. In terms of biological role, involved in the third step of the chorismate pathway, which leads to the biosynthesis of aromatic amino acids. Catalyzes the cis-dehydration of 3-dehydroquinate (DHQ) and introduces the first double bond of the aromatic ring to yield 3-dehydroshikimate. This chain is 3-dehydroquinate dehydratase, found in Dehalococcoides mccartyi (strain ATCC BAA-2100 / JCM 16839 / KCTC 5957 / BAV1).